The sequence spans 330 residues: Membrane progestin receptor gamma (330 aa).

Residues 1–51 (MLSLKLPRLFSIDQIPQVFHEQGILFGYRHPQSSATACILSLFQMTNETLN) lie on the Cytoplasmic side of the membrane. A helical membrane pass occupies residues 52–72 (IWTHLLPFWFFAWRFVTALYM). Residues 73–80 (TDIKNDSY) are Extracellular-facing. The chain crosses the membrane as a helical span at residues 81-101 (SWPMLVYMCTSCVYPLVSSCA). The Cytoplasmic segment spans residues 102 to 113 (HTFSSMSKNARH). A helical membrane pass occupies residues 114–134 (ICYFLDYGAVNLFSLGSAIAY). Residues 135 to 141 (SAYTFPD) are Extracellular-facing. The chain crosses the membrane as a helical span at residues 142-162 (ALMCTTFHDYYVALAVLNTIL). The Cytoplasmic segment spans residues 163–186 (STGLSCYSRFLEIQKPRLCKVIRV). A helical membrane pass occupies residues 187 to 207 (LAFAYPYTWDSLPIFYRLFLF). At 208 to 253 (PGESAQNEATSYHQKHMIMTLLASFLYSAHLPERLAPGRFDYIGHS) the chain is on the extracellular side. Residues 254 to 274 (HQLFHVCVILATHMQMEAILL) form a helical membrane-spanning segment. At 275 to 294 (DKTLRKEWLLATSKPFSFSQ) the chain is on the cytoplasmic side. Residues 295–315 (IAGAILLCIIFSLSNIIYFSA) form a helical membrane-spanning segment. Topologically, residues 316–330 (ALYRIPKPELHKKET) are extracellular.

This sequence belongs to the ADIPOR family. Expressed in the brain, lung, kidney, colon, adrenal and lung.

The protein resides in the cell membrane. Its function is as follows. Plasma membrane progesterone (P4) receptor coupled to G proteins. Seems to act through a G(i) mediated pathway. May be involved in oocyte maturation. The sequence is that of Membrane progestin receptor gamma from Homo sapiens (Human).